The chain runs to 362 residues: MIDPFQRLARRGLFLFDPETAHGMSIAALKSGLVPACQIAPDPRLRQTIAGLTFENPLGMAAGYDKNAEVPEALLKLGFGFTEIGTVTPKPQSGNPRPRIFRLVEDEAVINRLGFNNEGHEAAFRRLAELTGTGIFGVNIGANKDSEDRIADYVAGIRRFHSVARYFTANISSPNTPGLRDLQARESLAALLSAVLAVRDEMAEKSGRKIPVFLKIAPDLTEEGMDDIAAEALAHPLDGLIVSNTTLSRDGLKDQRQAKEAGGLSGVPLFEKSTAVLARMRKRVGPDLPIIGVGGVSSAETALEKIRAGADLVQLYSCMVYEGPGLPGTIVRGLSALLDREKAGSIRALRDSRLDYWAARKV.

Residues 62–66 (AGYDK) and Thr86 contribute to the FMN site. Residue Lys66 coordinates substrate. A substrate-binding site is contributed by 111–115 (NRLGF). FMN contacts are provided by Asn139 and Asn170. Asn170 is a substrate binding site. The active-site Nucleophile is the Ser173. Asn175 serves as a coordination point for substrate. Residues Lys215 and Ser243 each contribute to the FMN site. Residue 244–245 (NT) coordinates substrate. Residues Gly266, Gly295, and 316–317 (YS) each bind FMN.

It belongs to the dihydroorotate dehydrogenase family. Type 2 subfamily. In terms of assembly, monomer. FMN serves as cofactor.

It localises to the cell membrane. The catalysed reaction is (S)-dihydroorotate + a quinone = orotate + a quinol. It functions in the pathway pyrimidine metabolism; UMP biosynthesis via de novo pathway; orotate from (S)-dihydroorotate (quinone route): step 1/1. Functionally, catalyzes the conversion of dihydroorotate to orotate with quinone as electron acceptor. The protein is Dihydroorotate dehydrogenase (quinone) of Rhizobium etli (strain ATCC 51251 / DSM 11541 / JCM 21823 / NBRC 15573 / CFN 42).